The primary structure comprises 137 residues: ATP synthase epsilon chain, chloroplastic (137 aa).

This sequence belongs to the ATPase epsilon chain family. F-type ATPases have 2 components, CF(1) - the catalytic core - and CF(0) - the membrane proton channel. CF(1) has five subunits: alpha(3), beta(3), gamma(1), delta(1), epsilon(1). CF(0) has three main subunits: a, b and c.

It localises to the plastid. The protein resides in the chloroplast thylakoid membrane. Produces ATP from ADP in the presence of a proton gradient across the membrane. The protein is ATP synthase epsilon chain, chloroplastic of Pinus koraiensis (Korean pine).